We begin with the raw amino-acid sequence, 104 residues long: Large ribosomal subunit protein uL24 (104 aa).

Belongs to the universal ribosomal protein uL24 family. In terms of assembly, part of the 50S ribosomal subunit.

In terms of biological role, one of two assembly initiator proteins, it binds directly to the 5'-end of the 23S rRNA, where it nucleates assembly of the 50S subunit. One of the proteins that surrounds the polypeptide exit tunnel on the outside of the subunit. This chain is Large ribosomal subunit protein uL24, found in Shewanella denitrificans (strain OS217 / ATCC BAA-1090 / DSM 15013).